Reading from the N-terminus, the 45-residue chain is Thymosin beta-15A (45 aa).

2 stretches are compositionally biased toward basic and acidic residues: residues Met-1–Asn-27 and Ile-35–Ser-45. A disordered region spans residues Met-1 to Ser-45.

This sequence belongs to the thymosin beta family. Neuroblastoma-specific.

The protein resides in the cytoplasm. Its subcellular location is the cytoskeleton. Its function is as follows. Plays an important role in the organization of the cytoskeleton. Binds to and sequesters actin monomers (G actin) and therefore inhibits actin polymerization. The protein is Thymosin beta-15A (TMSB15A) of Homo sapiens (Human).